A 312-amino-acid polypeptide reads, in one-letter code: Methionyl-tRNA formyltransferase (312 aa).

Residue 112–115 (SLLP) participates in (6S)-5,6,7,8-tetrahydrofolate binding.

Belongs to the Fmt family.

The enzyme catalyses L-methionyl-tRNA(fMet) + (6R)-10-formyltetrahydrofolate = N-formyl-L-methionyl-tRNA(fMet) + (6S)-5,6,7,8-tetrahydrofolate + H(+). In terms of biological role, attaches a formyl group to the free amino group of methionyl-tRNA(fMet). The formyl group appears to play a dual role in the initiator identity of N-formylmethionyl-tRNA by promoting its recognition by IF2 and preventing the misappropriation of this tRNA by the elongation apparatus. This chain is Methionyl-tRNA formyltransferase, found in Syntrophus aciditrophicus (strain SB).